The sequence spans 310 residues: uncharacterized protein (310 aa).

In terms of domain architecture, HTH lysR-type spans 5–62; sequence FTEENLLAFTTAARFGSFSKAAEELGLTTSAISYTIKRMETGLDVVLFTRSTRSIELT. The H-T-H motif DNA-binding region spans 22–42; it reads FSKAAEELGLTTSAISYTIKR.

It belongs to the LysR transcriptional regulatory family.

This is an uncharacterized protein from Escherichia coli (strain K12).